The primary structure comprises 782 residues: LPS-assembly protein LptD (782 aa).

The first 23 residues, 1 to 23 (MNKKHTLISLAILTALYSQQSLA), serve as a signal peptide directing secretion.

It belongs to the LptD family. Component of the lipopolysaccharide transport and assembly complex. Interacts with LptE and LptA.

It localises to the cell outer membrane. In terms of biological role, together with LptE, is involved in the assembly of lipopolysaccharide (LPS) at the surface of the outer membrane. The sequence is that of LPS-assembly protein LptD from Haemophilus influenzae (strain 86-028NP).